Reading from the N-terminus, the 169-residue chain is uncharacterized protein (169 aa).

2 disordered regions span residues 32–53 and 148–169; these read VSGP…APAP and VSGS…AGGA.

This is an uncharacterized protein from Homo sapiens (Human).